We begin with the raw amino-acid sequence, 92 residues long: 10 kDa late embryogenesis abundant protein (92 aa).

Residues 1 to 10 (MASQQGQQTR) show a composition bias toward polar residues. A disordered region spans residues 1–92 (MASQQGQQTR…GEREEEEEED (92 aa)). Composition is skewed to basic and acidic residues over residues 11-26 (KIPE…RAAK) and 38-71 (KSLE…EMGK).

It belongs to the small hydrophilic plant seed protein family. Maximally expressed in dry seeds. Also present in mid-maturation embryos.

Its function is as follows. LEA proteins are late embryonic proteins abundant in higher plant seed embryos. They may play an essential role in seed survival and in controlling water exchanges during seed desiccation and imbibition. The protein is 10 kDa late embryogenesis abundant protein of Helianthus annuus (Common sunflower).